The primary structure comprises 671 residues: Palmitoleoyl-protein carboxylesterase NOTUM (671 aa).

A signal peptide spans M1–S46. N95 is a glycosylation site (N-linked (GlcNAc...) asparagine). Catalysis depends on charge relay system residues S237 and D338. Residue N372 is glycosylated (N-linked (GlcNAc...) asparagine). H384 functions as the Charge relay system in the catalytic mechanism. The tract at residues H411–P592 is disordered. Positions N439–H454 are enriched in basic residues. Basic and acidic residues predominate over residues L470–R486. Residues Q487–Q497 are compositionally biased toward basic residues. The segment covering Q505–S514 has biased composition (basic and acidic residues). Positions P570 to T583 are enriched in polar residues. N-linked (GlcNAc...) asparagine glycans are attached at residues N578 and N612.

The protein belongs to the pectinacetylesterase family. Notum subfamily.

It localises to the secreted. It is found in the cell surface. It carries out the reaction [Wnt protein]-O-(9Z)-hexadecenoyl-L-serine + H2O = [Wnt protein]-L-serine + (9Z)-hexadecenoate + H(+). Carboxylesterase that acts as a key negative regulator of the Wnt signaling pathway by specifically mediating depalmitoleoylation of WNT proteins. Serine palmitoleoylation of WNT proteins is required for efficient binding to frizzled receptors. Also acts as a regulator of long-range activity of Hedgehog (hh), possibly by regulating the switch between low and high level hh pathway signaling. The chain is Palmitoleoyl-protein carboxylesterase NOTUM from Drosophila melanogaster (Fruit fly).